The sequence spans 391 residues: Processive diacylglycerol beta-glucosyltransferase (391 aa).

This sequence belongs to the glycosyltransferase 28 family. UgtP subfamily.

It localises to the cell membrane. The enzyme catalyses a 1,2-diacyl-3-O-(beta-D-glucopyranosyl)-sn-glycerol + UDP-alpha-D-glucose = a 1,2-diacyl-3-O-(beta-D-Glc-(1-&gt;6)-beta-D-Glc)-sn-glycerol + UDP + H(+). It catalyses the reaction a 1,2-diacyl-sn-glycerol + UDP-alpha-D-glucose = a 1,2-diacyl-3-O-(beta-D-glucopyranosyl)-sn-glycerol + UDP + H(+). Its pathway is glycolipid metabolism; diglucosyl-diacylglycerol biosynthesis. In terms of biological role, processive glucosyltransferase involved in the biosynthesis of both the bilayer- and non-bilayer-forming membrane glucolipids. Is able to successively transfer two glucosyl residues to diacylglycerol (DAG), thereby catalyzing the formation of beta-monoglucosyl-DAG (3-O-(beta-D-glucopyranosyl)-1,2-diacyl-sn-glycerol) and beta-diglucosyl-DAG (3-O-(beta-D-glucopyranosyl-beta-(1-&gt;6)-D-glucopyranosyl)-1,2-diacyl-sn-glycerol). Beta-diglucosyl-DAG is the predominant glycolipid found in Bacillales and is also used as a membrane anchor for lipoteichoic acid (LTA). The sequence is that of Processive diacylglycerol beta-glucosyltransferase from Staphylococcus aureus (strain MW2).